The following is a 219-amino-acid chain: Adenylate kinase (219 aa).

10–15 (GAGKGT) contacts ATP. The NMP stretch occupies residues 30–59 (ATGDLFRANISQGTDLGKQARAYMDAGQLV). AMP contacts are provided by residues threonine 31, arginine 36, 57 to 59 (QLV), 85 to 88 (GFPR), and glutamine 92. Positions 126–164 (GRRVCRNNSAHVFHLTYNPPKAEGVCDACGGELYQRDDD) are LID. ATP is bound by residues arginine 127 and 137-138 (VF). 2 residues coordinate AMP: arginine 161 and arginine 172. Position 200 (glycine 200) interacts with ATP.

This sequence belongs to the adenylate kinase family. In terms of assembly, monomer.

It localises to the cytoplasm. The catalysed reaction is AMP + ATP = 2 ADP. It functions in the pathway purine metabolism; AMP biosynthesis via salvage pathway; AMP from ADP: step 1/1. Functionally, catalyzes the reversible transfer of the terminal phosphate group between ATP and AMP. Plays an important role in cellular energy homeostasis and in adenine nucleotide metabolism. The protein is Adenylate kinase of Streptomyces griseus subsp. griseus (strain JCM 4626 / CBS 651.72 / NBRC 13350 / KCC S-0626 / ISP 5235).